The following is a 220-amino-acid chain: Vesicle-associated membrane protein 7 (220 aa).

A2 bears the N-acetylalanine; partial mark. Residues 2 to 188 (AILFAVVARG…ARAMCMKNLK (187 aa)) lie on the Cytoplasmic side of the membrane. One can recognise a Longin domain in the interval 7-110 (VVARGTTILA…AMNSEFSSVL (104 aa)). Positions 125-185 (KVMETQAQVD…RNLARAMCMK (61 aa)) constitute a v-SNARE coiled-coil homology domain. S167 and S168 each carry phosphoserine. A helical; Anchor for type IV membrane protein membrane pass occupies residues 189–209 (LTIIIIIVSIVFIYIIVSPLC). The Vesicular portion of the chain corresponds to 210-220 (GGFTWPSCVKK).

It belongs to the synaptobrevin family. Component of the SNARE complex composed of STX4, SNAP23 and VAMP7 that binds SYT7 during lysosomal exocytosis. Component of the SNARE complex composed of STX7, STX8, VAMP7 and VTI1B that is required for heterotypic fusion of late endosomes with lysosomes. May interact with STX17. Interacts with PICALM. Interacts with RAB21. In terms of tissue distribution, detected in all tissues tested.

Its subcellular location is the cytoplasmic vesicle. It is found in the secretory vesicle membrane. The protein resides in the golgi apparatus. It localises to the trans-Golgi network membrane. The protein localises to the late endosome membrane. Its subcellular location is the lysosome membrane. It is found in the endoplasmic reticulum membrane. The protein resides in the phagosome membrane. It localises to the synapse. The protein localises to the synaptosome. In terms of biological role, involved in the targeting and/or fusion of transport vesicles to their target membrane during transport of proteins from the early endosome to the lysosome. Required for heterotypic fusion of late endosomes with lysosomes and homotypic lysosomal fusion. Required for calcium regulated lysosomal exocytosis. Involved in the export of chylomicrons from the endoplasmic reticulum to the cis Golgi. Required for exocytosis of mediators during eosinophil and neutrophil degranulation, and target cell killing by natural killer cells. Required for focal exocytosis of late endocytic vesicles during phagosome formation. In Homo sapiens (Human), this protein is Vesicle-associated membrane protein 7 (VAMP7).